The sequence spans 218 residues: Lactosylceramide 4-alpha-galactosyltransferase (218 aa).

Positions 57–59 match the DXD motif motif; sequence DTD.

It belongs to the glycosyltransferase 32 family.

It localises to the golgi apparatus membrane. The catalysed reaction is a beta-D-Gal-(1-&gt;4)-beta-D-Glc-(1&lt;-&gt;1)-Cer(d18:1(4E)) + UDP-alpha-D-galactose = a globoside Gb3Cer (d18:1(4E)) + UDP + H(+). It carries out the reaction a beta-D-Gal-(1&lt;-&gt;1')-ceramide + UDP-alpha-D-galactose = alpha-D-Gal-(1-&gt;4)-beta-D-Gal-(1&lt;-&gt;1')-Cer + UDP + H(+). It functions in the pathway glycolipid biosynthesis. Catalyzes the transfer of galactose from UDP-alpha-D-galactose to lactosylceramide/beta-D-galactosyl-(1-&gt;4)-beta-D-glucosyl-(1&lt;-&gt;1)-ceramide(d18:1(4E)) to produce globotriaosylceramide/globoside Gb3Cer (d18:1(4E)). Also able to transfer galactose to galactosylceramide/beta-D-Gal-(1&lt;-&gt;1')-Cer. Globoside Gb3Cer is a glycosphingolipid of the globo serie, one of the major types of neutral root structures of glycosphingolipids, that constitute a significant portion of mammalian cell membranes. The polypeptide is Lactosylceramide 4-alpha-galactosyltransferase (A4GALT) (Pongo pygmaeus (Bornean orangutan)).